The sequence spans 447 residues: SPARC-related modular calcium-binding protein 2 (447 aa).

The signal sequence occupies residues 1 to 21; sequence MLPPQLCWLPLLAALLPPVPA. In terms of domain architecture, Kazal-like spans 34–86; that stretch reads QDKDRDCSLDCPSSPQKPLCASDGRTFLSRCEFQRAKCKDPQLEIAHRGNCKD. Disulfide bonds link C40–C71, C44–C64, C53–C84, C90–C113, C124–C131, and C133–C153. The region spanning 87–153 is the Thyroglobulin type-1 1 domain; the sequence is VSRCVAERKY…TAVAHKTPRC (67 aa). The interval 147–230 is disordered; sequence AHKTPRCPGS…QSALEEAKQP (84 aa). Over residues 161–172 the composition is skewed to basic and acidic residues; the sequence is VPQREGAGKADD. A glycan (N-linked (GlcNAc...) asparagine) is linked at N206. Positions 206-216 are enriched in polar residues; it reads NKTNKNSASSC. Positions 213–281 constitute a Thyroglobulin type-1 2 domain; sequence ASSCDQEHQS…TSTRYEQPKC (69 aa). 3 disulfides stabilise this stretch: C216–C240, C251–C258, and C260–C281. Residues 217 to 230 show a composition bias toward basic and acidic residues; sequence DQEHQSALEEAKQP. 2 EF-hand domains span residues 347 to 382 and 384 to 419; these read LEERVVHWYFKLLDKNSSGDIGKKEIKPFKRFLRKK and KPKKCVKKFVEYCDMNNDKSITVQELMGCLGVTREE. Ca(2+) is bound by residues D360, N362, S364, D366, E371, D397, N399, D401, S403, and E408. N-linked (GlcNAc...) asparagine glycosylation is present at N362. The interval 416-447 is disordered; sequence TREEGKANTRKRHTPRGNAESSSSNRQPRKQG.

As to quaternary structure, binds various proteins from the extracellular matrix. N-glycosylated. Strongly expressed in ovary, followed by heart, muscle, spleen, brain, thymus, lung, liver, kidney, spleen, testis, ovary and skeletal muscle.

The protein localises to the secreted. It localises to the extracellular space. The protein resides in the extracellular matrix. Its subcellular location is the basement membrane. In terms of biological role, can stimulate endothelial cell proliferation, migration, as well as angiogenesis. Promotes matrix assembly and cell adhesiveness. This is SPARC-related modular calcium-binding protein 2 (Smoc2) from Mus musculus (Mouse).